Here is a 352-residue protein sequence, read N- to C-terminus: MSANKKPVTTPLHLLQQLSHSLVEHLEGACKQALVDSEKLLAKLEKQRGKAQEKLHKARTKLQDAAKAGKTKAQAKARETISDLEEALDTLKARQADTRTYIVGLKRDVQESLKLAQGVGKVKEAAGKALESRKAKPATKPAAKAAAKPAVKTVAAKPAAKPAAKPAAKPAAKPAAKTAAAKPAAKPTAKPAAKPAAKPAAKTAAAKPAAKPAAKPVAKPAAKPAAKTAAAKPAAKPAAKPVAKPTAKPAAKTAAAKPAAKPAAKPAAKPAAKPVAKSAAAKPAAKPAAKPAAKPAAKPAAKPVAAKPAATKPATAPAAKPAATPSAPAAASSAASATPAAGSNGAAPTSAS.

The interval 128–352 (KALESRKAKP…SNGAAPTSAS (225 aa)) is disordered. Over residues 138 to 341 (ATKPAAKAAA…SSAASATPAA (204 aa)) the composition is skewed to low complexity.

Functionally, the promoter for a critical alginate biosynthetic gene, AlgD, encoding GDP-mannose dehydrogenase, is activated only under conditions reminiscent of the cystic fibrosis lung (i.e. under high osmolarity), and at least two regulatory genes, AlgP and AlgQ, have been implicated in this activation process. This chain is Transcriptional regulatory protein AlgP (algP), found in Pseudomonas aeruginosa (strain ATCC 15692 / DSM 22644 / CIP 104116 / JCM 14847 / LMG 12228 / 1C / PRS 101 / PAO1).